The sequence spans 203 residues: Urease accessory protein UreG (203 aa).

Residue 13 to 20 participates in GTP binding; the sequence is GPVGSGKT.

It belongs to the SIMIBI class G3E GTPase family. UreG subfamily. Homodimer. UreD, UreF and UreG form a complex that acts as a GTP-hydrolysis-dependent molecular chaperone, activating the urease apoprotein by helping to assemble the nickel containing metallocenter of UreC. The UreE protein probably delivers the nickel.

It is found in the cytoplasm. Functionally, facilitates the functional incorporation of the urease nickel metallocenter. This process requires GTP hydrolysis, probably effectuated by UreG. In Methylobacillus flagellatus (strain ATCC 51484 / DSM 6875 / VKM B-1610 / KT), this protein is Urease accessory protein UreG.